A 439-amino-acid polypeptide reads, in one-letter code: Homogentisate 1,2-dioxygenase (439 aa).

Residues H335, E341, and H371 each contribute to the Fe cation site.

Belongs to the homogentisate dioxygenase family. Requires Fe cation as cofactor.

It catalyses the reaction homogentisate + O2 = 4-maleylacetoacetate + H(+). It functions in the pathway amino-acid degradation; L-phenylalanine degradation; acetoacetate and fumarate from L-phenylalanine: step 4/6. The chain is Homogentisate 1,2-dioxygenase from Drosophila melanogaster (Fruit fly).